The primary structure comprises 436 residues: MKNKTRVSEYYLPLMKNVSGEVKLRSHKYSLRAGLVKQCGAGLYSWLPLGLKVLRNIESVIRQELDSMGMHEMLMPCIQLAKLWEESGRYSDYGKELLKFKDRHDNELLFGPTNEEVITAIVRDDLASYKQLPKILYHIQWKFRDEIRPRFGLMRAREFLMKDAYSFDVDQQSARISYNKVYQSYLRIFKRLGLNPIPCRANAGVIGGSLNHEFHITTTEGGEGKIFYPEEMGELVDEFCKIDPSNEHAVSVMTEKLQELFCFTEECNSSGIGNDNRICTAQGIEVGHIFLFGEKYSAPMQARFSGRDGKKKNFYMGSYGIGISRLLAAIIEVHSDDKGIIWPESIAPFKIGLINLHGESCGFAEEIFSKLDSVIYDDTADSQGVKFARMDLIGVPFQIIVGKNGPIHGTIELKYRLDSKRESRSLNELVSLFSHT.

Belongs to the class-II aminoacyl-tRNA synthetase family. ProS type 2 subfamily. In terms of assembly, homodimer.

It localises to the cytoplasm. The catalysed reaction is tRNA(Pro) + L-proline + ATP = L-prolyl-tRNA(Pro) + AMP + diphosphate. Its function is as follows. Catalyzes the attachment of proline to tRNA(Pro) in a two-step reaction: proline is first activated by ATP to form Pro-AMP and then transferred to the acceptor end of tRNA(Pro). This chain is Proline--tRNA ligase, found in Neorickettsia sennetsu (strain ATCC VR-367 / Miyayama) (Ehrlichia sennetsu).